A 420-amino-acid chain; its full sequence is ATP phosphoribosyltransferase regulatory subunit (420 aa).

This sequence belongs to the class-II aminoacyl-tRNA synthetase family. HisZ subfamily. Heteromultimer composed of HisG and HisZ subunits.

Its subcellular location is the cytoplasm. It participates in amino-acid biosynthesis; L-histidine biosynthesis; L-histidine from 5-phospho-alpha-D-ribose 1-diphosphate: step 1/9. Functionally, required for the first step of histidine biosynthesis. May allow the feedback regulation of ATP phosphoribosyltransferase activity by histidine. The protein is ATP phosphoribosyltransferase regulatory subunit of Bacillus cereus (strain G9842).